The primary structure comprises 154 residues: 6,7-dimethyl-8-ribityllumazine synthase (154 aa).

5-amino-6-(D-ribitylamino)uracil-binding positions include phenylalanine 22, 56 to 58, and 80 to 82; these read AFE and AVI. (2S)-2-hydroxy-3-oxobutyl phosphate is bound at residue 85–86; sequence ET. The active-site Proton donor is histidine 88. Position 113 (phenylalanine 113) interacts with 5-amino-6-(D-ribitylamino)uracil. Position 127 (arginine 127) interacts with (2S)-2-hydroxy-3-oxobutyl phosphate.

This sequence belongs to the DMRL synthase family.

The catalysed reaction is (2S)-2-hydroxy-3-oxobutyl phosphate + 5-amino-6-(D-ribitylamino)uracil = 6,7-dimethyl-8-(1-D-ribityl)lumazine + phosphate + 2 H2O + H(+). It participates in cofactor biosynthesis; riboflavin biosynthesis; riboflavin from 2-hydroxy-3-oxobutyl phosphate and 5-amino-6-(D-ribitylamino)uracil: step 1/2. Functionally, catalyzes the formation of 6,7-dimethyl-8-ribityllumazine by condensation of 5-amino-6-(D-ribitylamino)uracil with 3,4-dihydroxy-2-butanone 4-phosphate. This is the penultimate step in the biosynthesis of riboflavin. This is 6,7-dimethyl-8-ribityllumazine synthase from Thermoanaerobacter sp. (strain X514).